Consider the following 58-residue polypeptide: Apelin receptor early endogenous ligand (58 aa).

The first 22 residues, 1-22, serve as a signal peptide directing secretion; that stretch reads MRFFHPLYLLLLLLTVLVLISA.

Belongs to the Elabela/Toddler family. As to quaternary structure, interacts with aplnra and aplnrb. In terms of tissue distribution, expressed ubiquitously during late blastula and gastrula stages and becomes restricted to the lateral mesoderm, endoderm, and anterior and posterior notochord after gastrulation.

It localises to the secreted. The protein localises to the extracellular space. In terms of biological role, peptide hormone that functions as endogenous ligand for the G-protein-coupled apelin receptor (aplnra and/or aplnrb), that plays a role in the regulation of normal cardiovascular function and fluid homeostasis. Functions as a balanced agonist activating both G(i) protein pathway and beta-arrestin pathway of APLNR. Downstream G proteins activation, apelin can inhibit cAMP production and activate key intracellular effectors such as ERKs. On the other hand, APLNR activation induces beta-arrestin recruitment to the membrane leading to desensitization and internalization of the receptor. Required for mesendodermal differentiation, blood vessels formation and heart morphogenesis during early development and for adult cardiovascular homeostasis. Acts as a motogen by promoting mesendodermal cell migration during gastrulation by binding and activating the apelin receptor. Acts as an early embryonic regulator of cellular movement with a role in migration and development of cardiac progenitor cells. May act as a chemoattractant for the activation of angioblast migration toward the embryonic midline, i.e. the position of the future vessel formation, during vasculogenesis. Positively regulates sinus venosus (SV)-derived endothelial cells migration into the developing heart to promote coronary blood vessel sprouting. Involved in cardioprotective functions during heart failure. Mediates myocardial contractility in an ERK1/2-dependent manner. The protein is Apelin receptor early endogenous ligand of Danio rerio (Zebrafish).